The primary structure comprises 398 residues: Palmitoyl-[acyl-carrier-protein] 4-desaturase 3, chloroplastic (398 aa).

The N-terminal 29 residues, 1–29 (MALRSLFLPNAFPNASSFRGGSRRGAAPR), are a transit peptide targeting the chloroplast. Positions 139, 177, 180, 230, 263, and 266 each coordinate Fe cation.

This sequence belongs to the fatty acid desaturase type 2 family. As to quaternary structure, homodimer. The cofactor is Fe(2+). Preferentially expressed in the flower labellum. Low expression in leaves.

The protein localises to the plastid. Its subcellular location is the chloroplast stroma. It carries out the reaction hexadecanoyl-[ACP] + 2 reduced [2Fe-2S]-[ferredoxin] + O2 + 2 H(+) = (4Z)-hexadecenoyl-[ACP] + 2 oxidized [2Fe-2S]-[ferredoxin] + 2 H2O. It participates in lipid metabolism; fatty acid metabolism. In terms of biological role, converts palmitoyl-ACP to (4Z)-hexadec-4-enoyl-ACP by introduction of a cis double bond between carbons 4 and 5 of the acyl chain. This chain is Palmitoyl-[acyl-carrier-protein] 4-desaturase 3, chloroplastic (SAD3), found in Ophrys arachnitiformis subsp. archipelagi (Orchid).